A 534-amino-acid chain; its full sequence is CTP synthase (534 aa).

The amidoligase domain stretch occupies residues 1-266 (MKQKFIFVTG…DELIVARLGL (266 aa)). Ser14 is a CTP binding site. Ser14 provides a ligand contact to UTP. Residues 15 to 20 (SIGKGL) and Asp72 contribute to the ATP site. Mg(2+) contacts are provided by Asp72 and Glu140. Residues 147-149 (DIE), 187-192 (KSKPTQ), and Lys223 contribute to the CTP site. Residues 187-192 (KSKPTQ) and Lys223 each bind UTP. In terms of domain architecture, Glutamine amidotransferase type-1 spans 291–534 (KIGVVGKYVD…HFVKASLKKK (244 aa)). L-glutamine is bound at residue Gly353. Residue Cys380 is the Nucleophile; for glutamine hydrolysis of the active site. Residues 381–384 (FGMQ), Glu404, and Arg464 each bind L-glutamine. Residues His509 and Glu511 contribute to the active site.

This sequence belongs to the CTP synthase family. As to quaternary structure, homotetramer.

It catalyses the reaction UTP + L-glutamine + ATP + H2O = CTP + L-glutamate + ADP + phosphate + 2 H(+). The enzyme catalyses L-glutamine + H2O = L-glutamate + NH4(+). It carries out the reaction UTP + NH4(+) + ATP = CTP + ADP + phosphate + 2 H(+). The protein operates within pyrimidine metabolism; CTP biosynthesis via de novo pathway; CTP from UDP: step 2/2. With respect to regulation, allosterically activated by GTP, when glutamine is the substrate; GTP has no effect on the reaction when ammonia is the substrate. The allosteric effector GTP functions by stabilizing the protein conformation that binds the tetrahedral intermediate(s) formed during glutamine hydrolysis. Inhibited by the product CTP, via allosteric rather than competitive inhibition. In terms of biological role, catalyzes the ATP-dependent amination of UTP to CTP with either L-glutamine or ammonia as the source of nitrogen. Regulates intracellular CTP levels through interactions with the four ribonucleotide triphosphates. The protein is CTP synthase of Bdellovibrio bacteriovorus (strain ATCC 15356 / DSM 50701 / NCIMB 9529 / HD100).